A 426-amino-acid polypeptide reads, in one-letter code: Adenylosuccinate synthetase (426 aa).

Residues Gly13–Lys19 and Gly41–Thr43 contribute to the GTP site. The active-site Proton acceptor is Asp14. Asp14 and Gly41 together coordinate Mg(2+). IMP is bound by residues Asp14 to Lys17, Asn39 to His42, Thr129, Arg143, Gln224, Thr239, and Arg303. The active-site Proton donor is the His42. Thr299–Arg305 provides a ligand contact to substrate. Residues Arg305, Lys331–Asp333, and Gly414–Gly416 contribute to the GTP site.

This sequence belongs to the adenylosuccinate synthetase family. As to quaternary structure, homodimer. Requires Mg(2+) as cofactor.

The protein resides in the cytoplasm. The enzyme catalyses IMP + L-aspartate + GTP = N(6)-(1,2-dicarboxyethyl)-AMP + GDP + phosphate + 2 H(+). Its pathway is purine metabolism; AMP biosynthesis via de novo pathway; AMP from IMP: step 1/2. Functionally, plays an important role in the de novo pathway of purine nucleotide biosynthesis. Catalyzes the first committed step in the biosynthesis of AMP from IMP. This Caldicellulosiruptor bescii (strain ATCC BAA-1888 / DSM 6725 / KCTC 15123 / Z-1320) (Anaerocellum thermophilum) protein is Adenylosuccinate synthetase.